A 235-amino-acid polypeptide reads, in one-letter code: Heme oxygenase (235 aa).

Histidine 19 contributes to the heme b binding site.

It belongs to the heme oxygenase family.

It is found in the plastid. Its subcellular location is the chloroplast. The enzyme catalyses heme b + 3 reduced [NADPH--hemoprotein reductase] + 3 O2 = biliverdin IXalpha + CO + Fe(2+) + 3 oxidized [NADPH--hemoprotein reductase] + 3 H2O + H(+). Functionally, catalyzes the opening of the heme ring with the release of iron. Key enzyme in the synthesis of the chromophoric part of the photosynthetic antennae. This is Heme oxygenase (pbsA) from Rhodella violacea (Red alga).